Consider the following 270-residue polypeptide: Phosphatidylglycerol--prolipoprotein diacylglyceryl transferase (270 aa).

Helical transmembrane passes span 10 to 30, 56 to 76, 92 to 112, 120 to 140, 175 to 195, 202 to 222, and 237 to 257; these read VAVAIGPLQIHWYGLMYLVGI, LIFWLAMGVIVGGRLGYVLFY, WKGGMAFHGGFVGVMIAAWWF, FFQLMDFVAPLVPIGLGAGRI, SQLYQFALEGVALFIILNLYA, MAVSGMFALFYGIFRFVVEFV, and VTMGQILSLPMIIAGLFLIWL. R139 contributes to the a 1,2-diacyl-sn-glycero-3-phospho-(1'-sn-glycerol) binding site.

This sequence belongs to the Lgt family.

It is found in the cell inner membrane. The enzyme catalyses L-cysteinyl-[prolipoprotein] + a 1,2-diacyl-sn-glycero-3-phospho-(1'-sn-glycerol) = an S-1,2-diacyl-sn-glyceryl-L-cysteinyl-[prolipoprotein] + sn-glycerol 1-phosphate + H(+). It functions in the pathway protein modification; lipoprotein biosynthesis (diacylglyceryl transfer). Its function is as follows. Catalyzes the transfer of the diacylglyceryl group from phosphatidylglycerol to the sulfhydryl group of the N-terminal cysteine of a prolipoprotein, the first step in the formation of mature lipoproteins. This Pseudomonas savastanoi pv. phaseolicola (strain 1448A / Race 6) (Pseudomonas syringae pv. phaseolicola (strain 1448A / Race 6)) protein is Phosphatidylglycerol--prolipoprotein diacylglyceryl transferase.